The sequence spans 686 residues: MAEELLLERCDLEIQANGRDHHTADLCQEKLVLRRGQRFRLTLYFEGRGYEASVDSLTFGAVTGPDPSEEAGTKARFSLSDNVEEGSWSASVLDQQDNVLSLQLCTPANAPIGLYRLSLEASTGYQGSSFVLGHFILLYNAWCPADDVYLDSEEERREYVLTQQGFIYQGSVKFIKSVPWNFGQFEDGILDTCLMLLDMNPKFLKNRSRDCSRRSSPIYVGRVVSAMVNCNDDQGVLLGRWDNNYGDGISPMAWIGSVDILRRWKEHGCQQVKYGQCWVFAAVACTVLRCLGIPTRVVTNYNSAHDQNSNLLIEYFRNEFGELESNKSEMIWNFHCWVESWMTRPDLQPGYEGWQAIDPTPQEKSEGTYCCGPVSVRAIKEGDLSTKYDAPFVFAEVNADVVDWIRQEDGSVLKSINRSLVVGQKISTKSVGRDDREDITHTYKYPEGSPEEREVFTKANHLNKLAEKEETGVAMRIRVGDSMSMGNDFDVFAHIGNDTSETRECRLLLCARTVSYNGVLGPECGTEDINLTLDPYSENSIPLRILYEKYSGCLTESNLIKVRGLLIEPAANSYLLAERDLYLENPEIKIRVLGEPKQNRKLVAEVSLKNPLSDPLYDCIFTVEGAGLTKEQKSVEVSDPVPAGDLVKARVDLFPTDIGLHKLVVNFQCDKLKSVKGYRNVIIGPA.

At A2 the chain carries N-acetylalanine. 2 disulfides stabilise this stretch: C230-C370 and C370-C371. Residues C277, H335, and D358 contribute to the active site. Ca(2+)-binding residues include N398, D400, E437, E447, and E452. The residue at position 468 (K468) is an N6-acetyllysine. Residue 476-483 (RIRVGDSM) participates in GTP binding. E538 provides a ligand contact to Ca(2+). 579-582 (RDLY) lines the GTP pocket. Residue Q632 forms an Isoglutamyl lysine isopeptide (Gln-Lys) (interchain with K-?) linkage.

It belongs to the transglutaminase superfamily. Transglutaminase family. As to quaternary structure, monomer. Interacts with phospholipase C; promoting alpha-1 adrenergic receptor signaling. Interacts with PLCD1. Requires Ca(2+) as cofactor. Disulfide bond formation inactivates the calcium-dependent acyltransferase activity. Cys-370 can form disulfide bonds with both Cys-230 and Cys-371: formation of a disulfide bond between Cys-230 and Cys-370 facilitates formation of the disulfide between Cys-370 and Cys-371, which promotes inactivation of the acyltransferase activity. May also form interchain disulfids between Cys-230 and Cys-370. Ca(2+) protects against disulfide bond formation and inactivation. In terms of processing, auto-transglutaminated: Forms covalent cross-links mediated by transglutaminase between Gln-632 and the epsilon-amino group of a lysine residue of itself or HMGB1, forming homopolymers and heteropolymers, respectively. Post-translationally, S-nitrosylated, leading to inactivation of the acyltransferase activity.

It localises to the cytoplasm. It is found in the cytosol. The protein resides in the nucleus. The protein localises to the chromosome. Its subcellular location is the secreted. It localises to the extracellular space. It is found in the extracellular matrix. The protein resides in the cell membrane. The protein localises to the mitochondrion. It catalyses the reaction L-glutaminyl-[protein] + L-lysyl-[protein] = [protein]-L-lysyl-N(6)-5-L-glutamyl-[protein] + NH4(+). The catalysed reaction is L-glutaminyl-[protein] + serotonin = 5-serotonyl-L-glutamyl-[protein] + NH4(+). It carries out the reaction L-glutaminyl-[protein] + dopamine = 5-dopaminyl-L-glutamyl-[protein] + NH4(+). The enzyme catalyses L-glutaminyl-[protein] + histamine = 5-histaminyl-L-glutamyl-[protein] + NH4(+). It catalyses the reaction L-glutaminyl-[protein] + (R)-noradrenaline = 5-(R)-noradrenalinyl-L-glutamyl-[protein] + NH4(+). The catalysed reaction is L-glutaminyl-[protein] + H2O = L-glutamyl-[protein] + NH4(+). Acyltransferase activity is regulated by the binding of GTP and Ca(2+): inactivated by GTP, which stabilizes its closed structure, thereby obstructing the accessibility of substrates to the active sites. In contrast, Ca(2+) acts as a cofactor by inducing conformational change to the active open form. In absence of Ca(2+), Mg(2+) may bind Ca(2+)-binding sites, promoting GTP-binding and subsequent inhibition of the acyltransferase activity. Extracellularly reduced and activated by CLIC3. In terms of biological role, calcium-dependent acyltransferase that catalyzes the formation of covalent bonds between peptide-bound glutamine and various primary amines, such as gamma-amino group of peptide-bound lysine, or mono- and polyamines, thereby producing cross-linked or aminated proteins, respectively. Involved in many biological processes, such as bone development, angiogenesis, wound healing, cellular differentiation, chromatin modification and apoptosis. Acts as a protein-glutamine gamma-glutamyltransferase by mediating the cross-linking of proteins, such as ACO2, HSPB6, FN1, HMGB1, RAP1GDS1, SLC25A4/ANT1, SPP1 and WDR54. Under physiological conditions, the protein cross-linking activity is inhibited by GTP; inhibition is relieved by Ca(2+) in response to various stresses. When secreted, catalyzes cross-linking of proteins of the extracellular matrix, such as FN1 and SPP1 resulting in the formation of scaffolds. Plays a key role during apoptosis, both by (1) promoting the cross-linking of cytoskeletal proteins resulting in condensation of the cytoplasm, and by (2) mediating cross-linking proteins of the extracellular matrix, resulting in the irreversible formation of scaffolds that stabilize the integrity of the dying cells before their clearance by phagocytosis, thereby preventing the leakage of harmful intracellular components. In addition to protein cross-linking, can use different monoamine substrates to catalyze a vast array of protein post-translational modifications: mediates aminylation of serotonin, dopamine, noradrenaline or histamine into glutamine residues of target proteins to generate protein serotonylation, dopaminylation, noradrenalinylation or histaminylation, respectively. Mediates protein serotonylation of small GTPases during activation and aggregation of platelets, leading to constitutive activation of these GTPases. Plays a key role in chromatin organization by mediating serotonylation and dopaminylation of histone H3. Catalyzes serotonylation of 'Gln-5' of histone H3 (H3Q5ser) during serotonergic neuron differentiation, thereby facilitating transcription. Acts as a mediator of neurotransmission-independent role of nuclear dopamine in ventral tegmental area (VTA) neurons: catalyzes dopaminylation of 'Gln-5' of histone H3 (H3Q5dop), thereby regulating relapse-related transcriptional plasticity in the reward system. Regulates vein remodeling by mediating serotonylation and subsequent inactivation of ATP2A2/SERCA2. Also acts as a protein deamidase by mediating the side chain deamidation of specific glutamine residues of proteins to glutamate. Catalyzes specific deamidation of protein gliadin, a component of wheat gluten in the diet. May also act as an isopeptidase cleaving the previously formed cross-links. Also able to participate in signaling pathways independently of its acyltransferase activity: acts as a signal transducer in alpha-1 adrenergic receptor-mediated stimulation of phospholipase C-delta (PLCD) activity and is required for coupling alpha-1 adrenergic agonists to the stimulation of phosphoinositide lipid metabolism. This chain is Protein-glutamine gamma-glutamyltransferase 2, found in Mus musculus (Mouse).